The sequence spans 693 residues: Transcription activator of gluconeogenesis BC1G_14637 (693 aa).

Positions 1 to 12 are enriched in acidic residues; sequence MSGETEIDDPEV. A disordered region spans residues 1-75; that stretch reads MSGETEIDDP…KFDPKDPLRP (75 aa). The span at 21–49 shows a compositional bias: basic and acidic residues; it reads YSDHEQELDVIGKEGDNQEMAEQKVRPDG. Residues 52–62 show a composition bias toward polar residues; it reads NGNTVGATATV. Residues 65–74 show a composition bias toward basic and acidic residues; it reads PKFDPKDPLR. The zn(2)-C6 fungal-type DNA-binding region spans 84 to 112; the sequence is CFACQRAHLTCGDERPCQRCIKRGLADAC. Polar residues-rich tracts occupy residues 144–155 and 275–287; these read SSNRATAASTPT and SAET…SAGM. Disordered regions lie at residues 144-170, 273-299, 350-413, and 531-567; these read SSNR…QPDT, SGSA…FSNN, TSGS…RNRD, and NLNT…DSNP. Over residues 356 to 367 the composition is skewed to low complexity; that stretch reads SPSTDASPAAST. Residues 369-379 are compositionally biased toward polar residues; the sequence is GFESSPTTTNY. Low complexity predominate over residues 394–408; the sequence is KSGPSGKLGPSGILG.

The protein belongs to the ERT1/acuK family.

Its subcellular location is the nucleus. In terms of biological role, transcription factor which regulates nonfermentable carbon utilization. Activator of gluconeogenetic genes. The chain is Transcription activator of gluconeogenesis BC1G_14637 from Botryotinia fuckeliana (strain B05.10) (Noble rot fungus).